We begin with the raw amino-acid sequence, 191 residues long: Outer membrane lipoprotein DolP (191 aa).

A signal peptide spans 1–18 (MKALSPIAVLISALLLQG). Residue C19 is the site of N-palmitoyl cysteine attachment. C19 carries S-diacylglycerol cysteine lipidation. BON domains are found at residues 46–115 (DDGT…RQGQ) and 124–191 (NDTW…TFIK).

The protein belongs to the lipoprotein DolP family.

It localises to the cell outer membrane. Its function is as follows. Plays an important role in maintaining outer membrane integrity. The polypeptide is Outer membrane lipoprotein DolP (Escherichia coli O157:H7).